The chain runs to 158 residues: Ribosomal RNA large subunit methyltransferase H (158 aa).

S-adenosyl-L-methionine is bound by residues L74, G105, and 124-129 (LGPLTL).

This sequence belongs to the RNA methyltransferase RlmH family. Homodimer.

Its subcellular location is the cytoplasm. The catalysed reaction is pseudouridine(1915) in 23S rRNA + S-adenosyl-L-methionine = N(3)-methylpseudouridine(1915) in 23S rRNA + S-adenosyl-L-homocysteine + H(+). In terms of biological role, specifically methylates the pseudouridine at position 1915 (m3Psi1915) in 23S rRNA. The protein is Ribosomal RNA large subunit methyltransferase H of Xylella fastidiosa (strain 9a5c).